Here is a 350-residue protein sequence, read N- to C-terminus: Mannonate dehydratase (350 aa).

This sequence belongs to the mannonate dehydratase family. Fe(2+) serves as cofactor. It depends on Mn(2+) as a cofactor.

The enzyme catalyses D-mannonate = 2-dehydro-3-deoxy-D-gluconate + H2O. It functions in the pathway carbohydrate metabolism; pentose and glucuronate interconversion. Functionally, catalyzes the dehydration of D-mannonate. The sequence is that of Mannonate dehydratase from Clostridium perfringens (strain 13 / Type A).